Here is a 150-residue protein sequence, read N- to C-terminus: 3-hydroxyacyl-[acyl-carrier-protein] dehydratase FabZ (150 aa).

Residue H51 is part of the active site.

This sequence belongs to the thioester dehydratase family. FabZ subfamily.

It localises to the cytoplasm. It catalyses the reaction a (3R)-hydroxyacyl-[ACP] = a (2E)-enoyl-[ACP] + H2O. Involved in unsaturated fatty acids biosynthesis. Catalyzes the dehydration of short chain beta-hydroxyacyl-ACPs and long chain saturated and unsaturated beta-hydroxyacyl-ACPs. This Geobacter sulfurreducens (strain ATCC 51573 / DSM 12127 / PCA) protein is 3-hydroxyacyl-[acyl-carrier-protein] dehydratase FabZ.